Consider the following 539-residue polypeptide: GMP synthase [glutamine-hydrolyzing] (539 aa).

A Glutamine amidotransferase type-1 domain is found at 4-202; sequence KVLILDFGSQ…VLEIAGAKPD (199 aa). Catalysis depends on cysteine 81, which acts as the Nucleophile. Catalysis depends on residues histidine 176 and glutamate 178. The GMPS ATP-PPase domain maps to 203-395; that stretch reads WVMRDHIDEA…LGLPHEMVYR (193 aa). ATP is bound at residue 230-236; sequence SGGVDSS.

In terms of assembly, homodimer.

It carries out the reaction XMP + L-glutamine + ATP + H2O = GMP + L-glutamate + AMP + diphosphate + 2 H(+). The protein operates within purine metabolism; GMP biosynthesis; GMP from XMP (L-Gln route): step 1/1. Functionally, catalyzes the synthesis of GMP from XMP. The chain is GMP synthase [glutamine-hydrolyzing] from Ralstonia pickettii (strain 12J).